A 344-amino-acid polypeptide reads, in one-letter code: tRNA N6-adenosine threonylcarbamoyltransferase (344 aa).

Fe cation is bound by residues His110 and His114. Residues 133-137 (VVSGA), Asp166, Gly179, and Asn278 each bind substrate. Asp303 provides a ligand contact to Fe cation.

The protein belongs to the KAE1 / TsaD family. Requires Fe(2+) as cofactor.

It localises to the cytoplasm. The catalysed reaction is L-threonylcarbamoyladenylate + adenosine(37) in tRNA = N(6)-L-threonylcarbamoyladenosine(37) in tRNA + AMP + H(+). Its function is as follows. Required for the formation of a threonylcarbamoyl group on adenosine at position 37 (t(6)A37) in tRNAs that read codons beginning with adenine. Is involved in the transfer of the threonylcarbamoyl moiety of threonylcarbamoyl-AMP (TC-AMP) to the N6 group of A37, together with TsaE and TsaB. TsaD likely plays a direct catalytic role in this reaction. This chain is tRNA N6-adenosine threonylcarbamoyltransferase, found in Chlamydia pneumoniae (Chlamydophila pneumoniae).